The primary structure comprises 506 residues: Anaerobic nitric oxide reductase transcription regulator NorR (506 aa).

D57 carries the post-translational modification 4-aspartylphosphate. In terms of domain architecture, Sigma-54 factor interaction spans 187–416 (MIGLSPAMTQ…LEHAIHRAVV (230 aa)). Residues 215 to 222 (GETGTGKE) and 278 to 287 (ADNGTLFLDE) each bind ATP. The segment at residues 481 to 500 (WAASARALETDVANLHRLAK) is a DNA-binding region (H-T-H motif).

It functions in the pathway nitrogen metabolism; nitric oxide reduction. Functionally, required for the expression of anaerobic nitric oxide (NO) reductase, acts as a transcriptional activator for at least the norVW operon. Activation also requires sigma-54. The sequence is that of Anaerobic nitric oxide reductase transcription regulator NorR from Salmonella gallinarum (strain 287/91 / NCTC 13346).